The primary structure comprises 62 residues: Large ribosomal subunit protein bL32m (62 aa).

The protein belongs to the bacterial ribosomal protein bL32 family.

It localises to the mitochondrion. The polypeptide is Large ribosomal subunit protein bL32m (RPL32) (Reclinomonas americana).